Here is a 161-residue protein sequence, read N- to C-terminus: ATP synthase subunit b (161 aa).

The chain crosses the membrane as a helical span at residues 1–21 (MYLNATILGQVIAFILFVWFC).

This sequence belongs to the ATPase B chain family. As to quaternary structure, F-type ATPases have 2 components, F(1) - the catalytic core - and F(0) - the membrane proton channel. F(1) has five subunits: alpha(3), beta(3), gamma(1), delta(1), epsilon(1). F(0) has three main subunits: a(1), b(2) and c(10-14). The alpha and beta chains form an alternating ring which encloses part of the gamma chain. F(1) is attached to F(0) by a central stalk formed by the gamma and epsilon chains, while a peripheral stalk is formed by the delta and b chains.

It is found in the cell inner membrane. In terms of biological role, f(1)F(0) ATP synthase produces ATP from ADP in the presence of a proton or sodium gradient. F-type ATPases consist of two structural domains, F(1) containing the extramembraneous catalytic core and F(0) containing the membrane proton channel, linked together by a central stalk and a peripheral stalk. During catalysis, ATP synthesis in the catalytic domain of F(1) is coupled via a rotary mechanism of the central stalk subunits to proton translocation. Functionally, component of the F(0) channel, it forms part of the peripheral stalk, linking F(1) to F(0). In Blochmanniella floridana, this protein is ATP synthase subunit b.